The chain runs to 168 residues: Small ribosomal subunit protein bS16 (168 aa).

The disordered stretch occupies residues 110–168 (LAEAEGGPSNEATQPKKKKAPAKKAASDIEATADPAGNADKSEPAAEGEDATVAGATEG).

It belongs to the bacterial ribosomal protein bS16 family.

This is Small ribosomal subunit protein bS16 from Mycobacterium sp. (strain JLS).